The primary structure comprises 358 residues: MDKLVDHFLSDQSRTMNEDLFSATSTELCYENLNRSCVRSPYSPGPRLILYAVFGFGAALAVCGNLLVMTSILHFRQLHSPANFLVASLACADFLVGLTVMPFSTVRSVEGCWYFGESYCKFHSCFEGSFCYSSIFHLCFISVDRYIAVSDPLTYPTRFTASVSGKCITFSWLLSIIYSFSLLYTGANEAGLEDLVSVLTCVGGCQIAVNQSWVFINFLLFLIPTLVMMTVYSKIFLIAKQQAQNIEKMSKQTARASESYKDRVAKRERKAAKTLGIAVAAFLLSWLPYFIDSIIDAFLGFITPTYVYEILVWIAYYNSAMNPLIYAFFYPWFRKAIKLIVTGKILRENSSTTNLFPE.

The Extracellular segment spans residues Met-1–Arg-47. Asn-34 carries N-linked (GlcNAc...) asparagine glycosylation. 2 cysteine pairs are disulfide-bonded: Cys-37–Cys-201 and Cys-120–Cys-205. A helical membrane pass occupies residues Leu-48–Val-68. Over Met-69 to Asn-83 the chain is Cytoplasmic. A helical transmembrane segment spans residues Phe-84–Ser-104. The Extracellular segment spans residues Thr-105–Lys-121. Residues Phe-122–Val-143 form a helical membrane-spanning segment. Residues Asp-144–Lys-166 lie on the Cytoplasmic side of the membrane. The chain crosses the membrane as a helical span at residues Cys-167–Ala-187. Over Asn-188 to Ser-212 the chain is Extracellular. N-linked (GlcNAc...) asparagine glycosylation occurs at Asn-210. Residues Trp-213–Ser-233 form a helical membrane-spanning segment. Residues Lys-234 to Thr-274 are Cytoplasmic-facing. A helical transmembrane segment spans residues Leu-275–Ile-295. Residues Asp-296–Glu-309 lie on the Extracellular side of the membrane. Residues Ile-310–Phe-333 form a helical membrane-spanning segment. Over Arg-334 to Glu-358 the chain is Cytoplasmic.

Belongs to the G-protein coupled receptor 1 family. As to expression, specifically expressed in neurons of the olfactory epithelium.

The protein localises to the cell membrane. Olfactory receptor specific for N,N-dimethylalkylamines trace amines. Trace amine compounds are enriched in animal body fluids and act on trace amine-associated receptors (TAARs) to elicit both intraspecific and interspecific innate behaviors. Ligand-binding causes a conformation change that triggers signaling via G(s)-class of G alpha proteins (GNAL or GNAS). This Mus musculus (Mouse) protein is Trace amine-associated receptor 7a.